A 240-amino-acid chain; its full sequence is Probable transcriptional regulatory protein Nmul_A2722 (240 aa).

Belongs to the TACO1 family.

The protein resides in the cytoplasm. The polypeptide is Probable transcriptional regulatory protein Nmul_A2722 (Nitrosospira multiformis (strain ATCC 25196 / NCIMB 11849 / C 71)).